A 296-amino-acid polypeptide reads, in one-letter code: Cobalamin trafficking protein CblD (296 aa).

Residues 1 to 38 (MAHVLCNRARLVSYLPGFCSLVKRVINPRAFSTAGSSG) constitute a mitochondrion transit peptide. Lysine 203 carries the post-translational modification N6-acetyllysine.

As to quaternary structure, heterodimer with MMACHC. Forms a multiprotein complex with MMACHC, MTR and MTRR.

It is found in the cytoplasm. The protein localises to the mitochondrion. Functionally, involved in cobalamin metabolism and trafficking. Plays a role in regulating the biosynthesis and the proportion of two coenzymes, methylcob(III)alamin (MeCbl) and 5'-deoxyadenosylcobalamin (AdoCbl). Promotes oxidation of cob(II)alamin bound to MMACHC. The processing of cobalamin in the cytosol occurs in a multiprotein complex composed of at least MMACHC, MMADHC, MTRR (methionine synthase reductase) and MTR (methionine synthase) which may contribute to shuttle safely and efficiently cobalamin towards MTR in order to produce methionine. The sequence is that of Cobalamin trafficking protein CblD (Mmadhc) from Rattus norvegicus (Rat).